Reading from the N-terminus, the 252-residue chain is Imidazole glycerol phosphate synthase subunit HisF (252 aa).

Residues Asp-11 and Asp-130 contribute to the active site.

This sequence belongs to the HisA/HisF family. As to quaternary structure, heterodimer of HisH and HisF.

It localises to the cytoplasm. The enzyme catalyses 5-[(5-phospho-1-deoxy-D-ribulos-1-ylimino)methylamino]-1-(5-phospho-beta-D-ribosyl)imidazole-4-carboxamide + L-glutamine = D-erythro-1-(imidazol-4-yl)glycerol 3-phosphate + 5-amino-1-(5-phospho-beta-D-ribosyl)imidazole-4-carboxamide + L-glutamate + H(+). Its pathway is amino-acid biosynthesis; L-histidine biosynthesis; L-histidine from 5-phospho-alpha-D-ribose 1-diphosphate: step 5/9. In terms of biological role, IGPS catalyzes the conversion of PRFAR and glutamine to IGP, AICAR and glutamate. The HisF subunit catalyzes the cyclization activity that produces IGP and AICAR from PRFAR using the ammonia provided by the HisH subunit. In Staphylococcus saprophyticus subsp. saprophyticus (strain ATCC 15305 / DSM 20229 / NCIMB 8711 / NCTC 7292 / S-41), this protein is Imidazole glycerol phosphate synthase subunit HisF.